An 883-amino-acid polypeptide reads, in one-letter code: Envelope glycoprotein B (883 aa).

The first 31 residues, 1-31 (MQSYIAVNIDMASLKMLICVCVAILIPSTLS), serve as a signal peptide directing secretion. At 32-750 (QDSHGIGWNN…SGIASFLSNP (719 aa)) the chain is on the virion surface side. 5 disulfides stabilise this stretch: C77–C535, C94–C491, C167–C229, C321–C369, and C558–C608. Residues N102 and N121 are each glycosylated (N-linked (GlcNAc...) asparagine; by host). Residues 134–140 (TWALFSR) are involved in fusion and/or binding to host membrane. N211 is a glycosylation site (N-linked (GlcNAc...) asparagine; by host). The segment at 216-223 (HQTLGYRT) is involved in fusion and/or binding to host membrane. N-linked (GlcNAc...) asparagine; by host glycosylation is found at N262 and N360. A disordered region spans residues 428 to 457 (QNHLPRGRERRQAAGRRTASLQSGPQGDRI). 3 N-linked (GlcNAc...) asparagine; by host glycosylation sites follow: N579, N635, and N649. Hydrophobic membrane proximal region stretches follow at residues 694 to 748 (IDTV…SFLS) and 724 to 744 (ALGTVVMTAAAAVISTVSGIA). Residues 751 to 771 (FAALAIGIAVVVSIILGLLAF) traverse the membrane as a helical segment. Topologically, residues 772-883 (KYVMNLKSNP…PSWAEESEDE (112 aa)) are intravirion. A disordered region spans residues 791 to 817 (PPAGTPPRPSRRYYKDEEEVEEDSDED). Residues 806 to 817 (DEEEVEEDSDED) are compositionally biased toward acidic residues. An Internalization motif motif is present at residues 868 to 871 (YPLL).

Belongs to the herpesviridae glycoprotein B family. Homotrimer; disulfide-linked. Binds to heparan sulfate proteoglycans. Interacts with gH/gL heterodimer. Post-translationally, a proteolytic cleavage by host furin generates two subunits that remain linked by disulfide bonds.

It is found in the virion membrane. The protein localises to the host cell membrane. It localises to the host endosome membrane. Its subcellular location is the host Golgi apparatus membrane. Functionally, envelope glycoprotein that forms spikes at the surface of virion envelope. Essential for the initial attachment to heparan sulfate moieties of the host cell surface proteoglycans. Involved in fusion of viral and cellular membranes leading to virus entry into the host cell. Following initial binding to its host receptors, membrane fusion is mediated by the fusion machinery composed at least of gB and the heterodimer gH/gL. May be involved in the fusion between the virion envelope and the outer nuclear membrane during virion egress. This Infectious laryngotracheitis virus (strain SA-2) (ILTV) protein is Envelope glycoprotein B.